Here is a 3838-residue protein sequence, read N- to C-terminus: Replicase polyprotein 1ab (3838 aa).

The segment at 8-28 adopts a C4-type; atypical zinc-finger fold; the sequence is CMCTPAARVFWNAGQVFCTRC. Residues 69–180 form the Peptidase C31 domain; that stretch reads ECTPSGCCWL…QPFCPFEEAH (112 aa). Positions 69 to 182 are PCP1-alpha; the sequence is ECTPSGCCWL…FCPFEEAHSD (114 aa). Residues Cys-76 and His-146 each act as for Nsp1-alpha papain-like cysteine proteinase activity in the active site. An important for host EIF2AK2 inhibition region spans residues 203 to 204; that stretch reads MM. Positions 269-384 are PCP1-beta; it reads PNVFDGKCWL…IFRFGAHKWY (116 aa). The Peptidase C32 domain maps to 269 to 385; it reads PNVFDGKCWL…FRFGAHKWYG (117 aa). Active-site for Nsp1-beta papain-like cysteine proteinase activity residues include Cys-276 and His-345. The segment at 418–505 is OTU-like; sequence ITTYSPPTDG…GVHWEVEVRS (88 aa). The Peptidase C33 domain occupies 420 to 527; it reads TYSPPTDGSC…VGVCSEGCVA (108 aa). Active-site for Nsp2 cysteine proteinase activity residues include Cys-429 and His-498. Disordered stretches follow at residues 728 to 758 and 1027 to 1064; these read AIGS…SHPA and SVTP…SHAS. Positions 737–749 are enriched in basic and acidic residues; the sequence is DSKRENMHNSRED. Helical transmembrane passes span 1094-1114, 1117-1137, 1162-1182, 1211-1231, and 1235-1255; these read LMTW…TLFS, GSMA…LLLC, GVFG…SNPV, GLVV…LGGS, and WHVI…VYVV. Positions 1132–1255 are HD1; that stretch reads LALLLCRSYP…DLALSLVYVV (124 aa). A WCCH region spans residues 1310–1334; that stretch reads TGWRGCWRGESPIHQPHQKPIAYAN. 4 consecutive transmembrane segments (helical) span residues 1450 to 1470, 1526 to 1546, 1556 to 1576, and 1592 to 1612; these read TLAV…GLWF, EVGI…RLAL, AFCA…PILL, and FLVF…GLLW. The HD2 stretch occupies residues 1451–1612; that stretch reads LAVAQVSVWT…LSLGITGLLW (162 aa). A Peptidase S32 domain is found at 1677–1879; it reads GAFRTHKPCL…SLLASVPVME (203 aa). Residues His-1715, Asp-1740, and Ser-1793 each act as charge relay system; for 3C-like serine proteinase activity in the active site. 5 helical membrane passes run 1875 to 1895, 1916 to 1936, 1960 to 1980, 2003 to 2023, and 2029 to 2048; these read VPVM…FLLW, ILPA…LAWA, LAFY…AFAG, SYVP…LWLF, and HNML…RYFA. Positions 1902-2023 are HD3; it reads WTPIVAVGFF…HALGVILWLF (122 aa). Positions 2364–2527 constitute a NiRAN domain; that stretch reads IISQLQGLTT…LPYKLYPVRG (164 aa). The RdRp catalytic domain maps to 2765–2899; the sequence is AGRCLEADLA…LYAERPTFPN (135 aa). The AV ZBD domain maps to 3021-3084; that stretch reads GKKFRHCGIC…SPVGAGRSPL (64 aa). Positions 3027, 3030, 3040, 3045, 3048, 3050, 3052, 3054, 3061, 3063, 3070, and 3073 each coordinate Zn(2+). Residues 3134–3293 form the (+)RNA virus helicase ATP-binding domain; sequence DLPDGDYQVV…VFDQMPQKQL (160 aa). Position 3168 to 3175 (3168 to 3175) interacts with ATP; it reads VGPPGSGK. The 130-residue stretch at 3294-3423 folds into the (+)RNA virus helicase C-terminal domain; the sequence is TTIYRFGPNI…FSRGDDLVVL (130 aa). Positions 3462 to 3559 constitute an AV-Nsp11N/CoV-Nsp15M domain; the sequence is EGSCMPLPQV…LTLYIRGEPQ (98 aa). A NendoU domain is found at 3561 to 3683; the sequence is LPETLVSTGR…MVWKGATAYF (123 aa). Residues His-3592, His-3607, and Lys-3636 contribute to the active site.

This sequence belongs to the arteriviridae polyprotein family. In terms of assembly, nsp1-alpha papain-like: Interacts with host RNF31. As to quaternary structure, interacts with host EIF2AK2; this interaction occurs in host stress granules and leads to EIF2AK2 inhibition. Interacts with host G3BP1; this interaction probably plays a role in Nsp1-beta-mediated inhibition of host EIF2AK2. Interacts with host DDX18; this interaction redistributes host DDX18 to the cytoplasm. In terms of assembly, interacts with host IFITM1. As to quaternary structure, interacts with host DDX5. Interacts with host OTULIN. In terms of assembly, interacts with host LGALS3. Post-translationally, specific enzymatic cleavages in vivo by its own proteases yield mature proteins. Nsp1 is autocleaved into two subunits, Nsp1-alpha and Nsp1-beta. There are two alternative pathways for processing. Either nsp4-5 is cleaved, which represents the major pathway or the nsp5-6 and nsp6-7 are processed, which represents the minor pathway. The major pathway occurs when nsp2 acts as a cofactor for nsp4.

The protein localises to the host nucleus. It is found in the host cytoplasm. The protein resides in the host membrane. Its subcellular location is the host endoplasmic reticulum. It localises to the host perinuclear region. The enzyme catalyses RNA(n) + a ribonucleoside 5'-triphosphate = RNA(n+1) + diphosphate. It carries out the reaction ATP + H2O = ADP + phosphate + H(+). It catalyses the reaction Thiol-dependent hydrolysis of ester, thioester, amide, peptide and isopeptide bonds formed by the C-terminal Gly of ubiquitin (a 76-residue protein attached to proteins as an intracellular targeting signal).. The catalysed reaction is uridylyl-uridylyl-ribonucleotide-RNA = a 3'-end uridylyl-2',3'-cyclophospho-uridine-RNA + a 5'-end dephospho-ribonucleoside-RNA. Its function is as follows. Contains the activities necessary for the transcription of negative stranded RNA, leader RNA, subgenomic mRNAs and progeny virion RNA as well as proteinases responsible for the cleavage of the polyprotein into functional products. Functionally, inhibits host IFN-beta production. Plays a role in the degradation of the host transcriptional activator CREBBP protein. The degradation of host CREBBP which is a key component of the IFN enhanceosome is likely responsible for the inhibition of interferon mediated by Nsp1-alpha. Also participates in the inhibition of host NF-kappa-B activation by counteracting LUBAC-dependent induction of NF-kappa-B. Reduces host NEMO ubiquitination by blocking the interaction between the two LUBAC complex components RNF31 and SHARPIN. Plays a role in blocking host mRNA nuclear export to the cytoplasm and subversion of host protein synthesis. Additionally, inhibits the interferon-activated JAK/STAT signal transduction by mediating the ubiquitination and subsequent proteasomal degradation of host KPNA1. Repurposes the host antiviral stress granules into a proviral platform to counteract the EIF2AK2/PKR restriction, thereby regulating the host inflammatory response. In terms of biological role, multifunctional protein that acts as a viral protease and as a viral antagonist of host immune response. Cleaves the nsp2/nsp3 site in the viral polyprotein. Displays deubiquitinating activity that cleaves both ubiquitinated and ISGylated products and therefore inhibits ubiquitin and ISG15-dependent host innate immunity. Also deubiquinates host NFKBIA, thereby interfering with NFKBIA degradation and impairing subsequent NF-kappa-B activation. Its function is as follows. Plays a role in the inhibition of the immune response by interacting with host IFITM1. This interaction leads to the proteasomal degradation of the IFN-induced antiviral protein IFITM1. Functionally, cleaves the majority of cleavage sites present in the C-terminus of the polyprotein. Triggers host apoptosis through caspase-3, -8, and -9 activations. Subverts host innate immune responses through its protease activity. Targets the NF-kappa-B essential modulator NEMO and mediates its cleavage. Blocks host interferon beta induction and downstream signaling by cleaving mitochondrial MAVS, dislodging it from the mitochondria. Impairs host defense by cleaving host mRNA-decapping enzyme DCP1A to attenuate its antiviral activity. Plays a role in the initial induction of autophagosomes from host endoplasmic reticulum. In terms of biological role, plays a role in the inhibition of host STAT3 signaling pathway by inducing the degradation of STAT3. Its function is as follows. Responsible for replication and transcription of the viral RNA genome. Functionally, displays RNA and DNA duplex-unwinding activities with 5' to 3' polarity. Plays a role in viral transcription/replication and prevents the simultaneous activation of host cell dsRNA sensors, such as MDA5/IFIH1, OAS, PKR and NLRP3 inflammasome. Acts by degrading the 5'-polyuridines generated during replication of the poly(A) region of viral genomic and subgenomic RNAs. Catalyzes a two-step reaction in which a 2'3'-cyclic phosphate (2'3'-cP) is first generated by 2'-O transesterification, which is then hydrolyzed to a 3'-phosphate (3'-P). If not degraded, poly(U) RNA would hybridize with poly(A) RNA tails and activate host dsRNA sensors. Also plays a role in the inhibition of host type I interferon production by recruiting host OTULIN to promote removal of linear ubiquitination targeting host NEMO. The protein is Replicase polyprotein 1ab of Sus scrofa (Pig).